The chain runs to 291 residues: NAD kinase (291 aa).

Residue Asp73 is the Proton acceptor of the active site. Residues 73-74 (DG), 147-148 (ND), Arg175, Asp177, and Gln246 each bind NAD(+).

Belongs to the NAD kinase family. It depends on a divalent metal cation as a cofactor.

The protein resides in the cytoplasm. The catalysed reaction is NAD(+) + ATP = ADP + NADP(+) + H(+). In terms of biological role, involved in the regulation of the intracellular balance of NAD and NADP, and is a key enzyme in the biosynthesis of NADP. Catalyzes specifically the phosphorylation on 2'-hydroxyl of the adenosine moiety of NAD to yield NADP. This Laribacter hongkongensis (strain HLHK9) protein is NAD kinase.